A 143-amino-acid polypeptide reads, in one-letter code: Small ribosomal subunit protein eS6 (143 aa).

The protein belongs to the eukaryotic ribosomal protein eS6 family.

This Methanoregula boonei (strain DSM 21154 / JCM 14090 / 6A8) protein is Small ribosomal subunit protein eS6.